A 449-amino-acid polypeptide reads, in one-letter code: Exodeoxyribonuclease 7 large subunit (449 aa).

It belongs to the XseA family. Heterooligomer composed of large and small subunits.

Its subcellular location is the cytoplasm. It catalyses the reaction Exonucleolytic cleavage in either 5'- to 3'- or 3'- to 5'-direction to yield nucleoside 5'-phosphates.. In terms of biological role, bidirectionally degrades single-stranded DNA into large acid-insoluble oligonucleotides, which are then degraded further into small acid-soluble oligonucleotides. The chain is Exodeoxyribonuclease 7 large subunit from Salmonella newport (strain SL254).